The following is a 367-amino-acid chain: Glutamate 5-kinase (367 aa).

Lysine 17 is a binding site for ATP. Serine 57, aspartate 144, and asparagine 156 together coordinate substrate. ATP is bound by residues 176-177 (SD) and 217-223 (TGGMVSK). One can recognise a PUA domain in the interval 279–357 (VGSLTLDEGA…SELPCELRRP (79 aa)).

This sequence belongs to the glutamate 5-kinase family.

The protein localises to the cytoplasm. The enzyme catalyses L-glutamate + ATP = L-glutamyl 5-phosphate + ADP. It functions in the pathway amino-acid biosynthesis; L-proline biosynthesis; L-glutamate 5-semialdehyde from L-glutamate: step 1/2. Functionally, catalyzes the transfer of a phosphate group to glutamate to form L-glutamate 5-phosphate. This chain is Glutamate 5-kinase, found in Mycobacterium leprae (strain Br4923).